Reading from the N-terminus, the 316-residue chain is Olfactory receptor 2AG1 (316 aa).

The Extracellular portion of the chain corresponds to 1 to 25; it reads MELWNFTLGSGFILVGILNDSGSPE. N-linked (GlcNAc...) asparagine glycans are attached at residues asparagine 5 and asparagine 19. A helical membrane pass occupies residues 26 to 49; it reads LLCATITILYLLALISNGLLLLAI. Over 50–57 the chain is Cytoplasmic; sequence TMEARLHM. The chain crosses the membrane as a helical span at residues 58 to 79; the sequence is PMYLLLGQLSLMDLLFTSVVTP. At 80–100 the chain is on the extracellular side; that stretch reads KALADFLRRENTISFGGCALQ. Cysteines 97 and 189 form a disulfide. Residues 101 to 120 traverse the membrane as a helical segment; it reads MFLALTMGGAEDLLLAFMAY. The Cytoplasmic portion of the chain corresponds to 121-139; sequence DRYVAICHPLTYMTLMSSR. The helical transmembrane segment at 140–158 threads the bilayer; it reads ACWLMVATSWILASLSALI. The Extracellular segment spans residues 159–195; it reads YTVYTMHYPFCRAQEIRHLLCEIPHLLKVACADTSRY. A helical transmembrane segment spans residues 196-219; it reads ELMVYVMGVTFLIPSLAAILASYT. Residues 220 to 236 lie on the Cytoplasmic side of the membrane; the sequence is QILLTVLHMPSNEGRKK. A helical membrane pass occupies residues 237–259; that stretch reads ALVTCSSHLTVVGMFYGAATFMY. The Extracellular segment spans residues 260-272; that stretch reads VLPSSFHSTRQDN. A helical membrane pass occupies residues 273 to 292; the sequence is IISVFYTIVTPALNPLIYSL. Residues 293 to 316 lie on the Cytoplasmic side of the membrane; that stretch reads RNKEVMRALRRVLGKYMLPAHSTL.

It belongs to the G-protein coupled receptor 1 family.

Its subcellular location is the cell membrane. Functionally, odorant receptor. The sequence is that of Olfactory receptor 2AG1 (OR2AG1) from Homo sapiens (Human).